We begin with the raw amino-acid sequence, 276 residues long: Adenylate kinase (276 aa).

50-55 (GAGKGT) contacts ATP. The NMP stretch occupies residues 70–99 (ATGDMLRSQVAKKTPLGREAKKIMDQGGLV). AMP-binding positions include Thr-71, Arg-76, 97–99 (GLV), 126–129 (GFPR), and Gln-133. Positions 167–204 (GRLVHPASGRSYHTTFNPPKKAMTDDVTGEPLIQRSDD) are LID. Residues Arg-168 and 177–178 (SY) contribute to the ATP site. Residues Arg-201 and Arg-212 each coordinate AMP. Gln-240 contacts ATP.

Belongs to the adenylate kinase family. AK2 subfamily. As to quaternary structure, monomer.

The protein resides in the cytoplasm. It localises to the cytosol. It is found in the mitochondrion intermembrane space. It carries out the reaction AMP + ATP = 2 ADP. In terms of biological role, catalyzes the reversible transfer of the terminal phosphate group between ATP and AMP. Plays an important role in cellular energy homeostasis and in adenine nucleotide metabolism. Adenylate kinase activity is critical for regulation of the phosphate utilization and the AMP de novo biosynthesis pathways. This is Adenylate kinase from Pyricularia oryzae (strain 70-15 / ATCC MYA-4617 / FGSC 8958) (Rice blast fungus).